The chain runs to 467 residues: Light-independent protochlorophyllide reductase subunit N (467 aa).

The [4Fe-4S] cluster site is built by cysteine 23, cysteine 48, and cysteine 108.

It belongs to the BchN/ChlN family. In terms of assembly, protochlorophyllide reductase is composed of three subunits; ChlL, ChlN and ChlB. Forms a heterotetramer of two ChlB and two ChlN subunits. It depends on [4Fe-4S] cluster as a cofactor.

The catalysed reaction is chlorophyllide a + oxidized 2[4Fe-4S]-[ferredoxin] + 2 ADP + 2 phosphate = protochlorophyllide a + reduced 2[4Fe-4S]-[ferredoxin] + 2 ATP + 2 H2O. It participates in porphyrin-containing compound metabolism; chlorophyll biosynthesis (light-independent). Its function is as follows. Component of the dark-operative protochlorophyllide reductase (DPOR) that uses Mg-ATP and reduced ferredoxin to reduce ring D of protochlorophyllide (Pchlide) to form chlorophyllide a (Chlide). This reaction is light-independent. The NB-protein (ChlN-ChlB) is the catalytic component of the complex. This Nostoc sp. (strain PCC 7120 / SAG 25.82 / UTEX 2576) protein is Light-independent protochlorophyllide reductase subunit N.